Reading from the N-terminus, the 199-residue chain is Recombination protein RecR (199 aa).

The segment at 58-73 (CKKCFNLTSEEECDIC) adopts a C4-type zinc-finger fold. The 95-residue stretch at 81–175 (NIICVVAETK…KVTRIAYGLP (95 aa)) folds into the Toprim domain.

It belongs to the RecR family.

In terms of biological role, may play a role in DNA repair. It seems to be involved in an RecBC-independent recombinational process of DNA repair. It may act with RecF and RecO. The chain is Recombination protein RecR from Prochlorococcus marinus (strain MIT 9515).